Reading from the N-terminus, the 486-residue chain is Betaine aldehyde dehydrogenase (486 aa).

K(+)-binding residues include threonine 23 and aspartate 90. Position 147–149 (147–149 (GAW)) interacts with NAD(+). Residue lysine 159 is the Charge relay system of the active site. NAD(+) contacts are provided by residues 173–176 (KPSE) and 226–229 (ESGT). Leucine 241 contacts K(+). Residue glutamate 247 is the Proton acceptor of the active site. Positions 249, 281, and 382 each coordinate NAD(+). Residue cysteine 281 is the Nucleophile of the active site. A Cysteine sulfenic acid (-SOH) modification is found at cysteine 281. K(+) contacts are provided by lysine 452 and glycine 455. Glutamate 459 acts as the Charge relay system in catalysis.

The protein belongs to the aldehyde dehydrogenase family. In terms of assembly, dimer of dimers. K(+) is required as a cofactor.

The catalysed reaction is betaine aldehyde + NAD(+) + H2O = glycine betaine + NADH + 2 H(+). It participates in amine and polyamine biosynthesis; betaine biosynthesis via choline pathway; betaine from betaine aldehyde: step 1/1. In terms of biological role, involved in the biosynthesis of the osmoprotectant glycine betaine. Catalyzes the irreversible oxidation of betaine aldehyde to the corresponding acid. The protein is Betaine aldehyde dehydrogenase of Vibrio vulnificus (strain YJ016).